The chain runs to 467 residues: Tubulin beta-1 chain (467 aa).

Gln-11, Glu-69, Ser-138, Gly-142, Thr-143, Gly-144, Asn-204, and Asn-226 together coordinate GTP. Mg(2+) is bound at residue Glu-69. Acidic residues predominate over residues 429–444 (TIDDEEGGEEEEGGAE). Positions 429–448 (TIDDEEGGEEEEGGAEEEAR) are disordered.

The protein belongs to the tubulin family. In terms of assembly, dimer of alpha and beta chains. A typical microtubule is a hollow water-filled tube with an outer diameter of 25 nm and an inner diameter of 15 nM. Alpha-beta heterodimers associate head-to-tail to form protofilaments running lengthwise along the microtubule wall with the beta-tubulin subunit facing the microtubule plus end conferring a structural polarity. Microtubules usually have 13 protofilaments but different protofilament numbers can be found in some organisms and specialized cells. Requires Mg(2+) as cofactor.

It localises to the cytoplasm. Its subcellular location is the cytoskeleton. It is found in the spindle. The protein localises to the nucleus. Its function is as follows. Tubulin is the major constituent of microtubules, a cylinder consisting of laterally associated linear protofilaments composed of alpha- and beta-tubulin heterodimers. Microtubules grow by the addition of GTP-tubulin dimers to the microtubule end, where a stabilizing cap forms. Below the cap, tubulin dimers are in GDP-bound state, owing to GTPase activity of alpha-tubulin. The polypeptide is Tubulin beta-1 chain (BETA) (Physarum polycephalum (Slime mold)).